The primary structure comprises 368 residues: tRNA-specific 2-thiouridylase MnmA (368 aa).

ATP-binding positions include 12–19 and Met-38; that span reads AMSGGVDS. The active-site Nucleophile is the Cys-110. Cys-110 and Cys-207 are joined by a disulfide. Residue Gly-134 participates in ATP binding. Residues 157–159 form an interaction with tRNA region; it reads KDQ. The active-site Cysteine persulfide intermediate is the Cys-207. Residues 312–313 are interaction with tRNA; sequence RY.

It belongs to the MnmA/TRMU family.

It localises to the cytoplasm. The catalysed reaction is S-sulfanyl-L-cysteinyl-[protein] + uridine(34) in tRNA + AH2 + ATP = 2-thiouridine(34) in tRNA + L-cysteinyl-[protein] + A + AMP + diphosphate + H(+). Its function is as follows. Catalyzes the 2-thiolation of uridine at the wobble position (U34) of tRNA, leading to the formation of s(2)U34. This is tRNA-specific 2-thiouridylase MnmA from Geobacter metallireducens (strain ATCC 53774 / DSM 7210 / GS-15).